A 116-amino-acid chain; its full sequence is G antigen 10 (116 aa).

A disordered region spans residues 1–116 (MSWRGRSTYR…PEEGEKQSQC (116 aa)). Over residues 31–44 (FSDEVEPATPEEGE) the composition is skewed to acidic residues. 2 stretches are compositionally biased toward basic and acidic residues: residues 71 to 80 (PEADSQEQVH) and 102 to 116 (EEVK…QSQC).

It belongs to the GAGE family.

This is G antigen 10 (GAGE10) from Homo sapiens (Human).